The sequence spans 79 residues: Cytochrome b (79 aa).

Transmembrane regions (helical) follow at residues threonine 1–methionine 7, tryptophan 31–isoleucine 52, and tryptophan 67–alanine 79. Residues histidine 37 and histidine 51 each contribute to the heme b site.

It belongs to the cytochrome b family. The cytochrome bc1 complex contains 11 subunits: 3 respiratory subunits (MT-CYB, CYC1 and UQCRFS1), 2 core proteins (UQCRC1 and UQCRC2) and 6 low-molecular weight proteins (UQCRH/QCR6, UQCRB/QCR7, UQCRQ/QCR8, UQCR10/QCR9, UQCR11/QCR10 and a cleavage product of UQCRFS1). This cytochrome bc1 complex then forms a dimer. The cofactor is heme b.

It is found in the mitochondrion inner membrane. Functionally, component of the ubiquinol-cytochrome c reductase complex (complex III or cytochrome b-c1 complex) that is part of the mitochondrial respiratory chain. The b-c1 complex mediates electron transfer from ubiquinol to cytochrome c. Contributes to the generation of a proton gradient across the mitochondrial membrane that is then used for ATP synthesis. In Corcorax melanoramphos (White-winged chough), this protein is Cytochrome b (MT-CYB).